The chain runs to 126 residues: Aspartate 1-decarboxylase (126 aa).

Ser-25 functions as the Schiff-base intermediate with substrate; via pyruvic acid in the catalytic mechanism. Position 25 is a pyruvic acid (Ser) (Ser-25). Residue Thr-57 participates in substrate binding. Catalysis depends on Tyr-58, which acts as the Proton donor. Residue 73–75 (GGA) participates in substrate binding.

This sequence belongs to the PanD family. In terms of assembly, heterooctamer of four alpha and four beta subunits. It depends on pyruvate as a cofactor. In terms of processing, is synthesized initially as an inactive proenzyme, which is activated by self-cleavage at a specific serine bond to produce a beta-subunit with a hydroxyl group at its C-terminus and an alpha-subunit with a pyruvoyl group at its N-terminus.

The protein resides in the cytoplasm. The enzyme catalyses L-aspartate + H(+) = beta-alanine + CO2. Its pathway is cofactor biosynthesis; (R)-pantothenate biosynthesis; beta-alanine from L-aspartate: step 1/1. Its function is as follows. Catalyzes the pyruvoyl-dependent decarboxylation of aspartate to produce beta-alanine. This chain is Aspartate 1-decarboxylase, found in Acinetobacter baumannii (strain AB307-0294).